A 484-amino-acid polypeptide reads, in one-letter code: ATP synthase subunit beta (484 aa).

Residue 168-175 (GGAGVGKT) participates in ATP binding.

It belongs to the ATPase alpha/beta chains family. As to quaternary structure, F-type ATPases have 2 components, CF(1) - the catalytic core - and CF(0) - the membrane proton channel. CF(1) has five subunits: alpha(3), beta(3), gamma(1), delta(1), epsilon(1). CF(0) has three main subunits: a(1), b(2) and c(9-12). The alpha and beta chains form an alternating ring which encloses part of the gamma chain. CF(1) is attached to CF(0) by a central stalk formed by the gamma and epsilon chains, while a peripheral stalk is formed by the delta and b chains.

Its subcellular location is the cell membrane. It catalyses the reaction ATP + H2O + 4 H(+)(in) = ADP + phosphate + 5 H(+)(out). In terms of biological role, produces ATP from ADP in the presence of a proton gradient across the membrane. The catalytic sites are hosted primarily by the beta subunits. This chain is ATP synthase subunit beta, found in Arthrobacter sp. (strain FB24).